A 910-amino-acid polypeptide reads, in one-letter code: Ubiquitin carboxyl-terminal hydrolase 9 (910 aa).

Positions threonine 19–isoleucine 134 constitute a DUSP domain. Positions isoleucine 68–serine 89 are disordered. Residues alanine 303–valine 894 enclose the USP domain. Catalysis depends on cysteine 312, which acts as the Nucleophile. Histidine 852 acts as the Proton acceptor in catalysis.

It belongs to the peptidase C19 family.

It catalyses the reaction Thiol-dependent hydrolysis of ester, thioester, amide, peptide and isopeptide bonds formed by the C-terminal Gly of ubiquitin (a 76-residue protein attached to proteins as an intracellular targeting signal).. Its function is as follows. Recognizes and hydrolyzes the peptide bond at the C-terminal Gly of ubiquitin. Involved in the processing of poly-ubiquitin precursors as well as that of ubiquitinated proteins. The protein is Ubiquitin carboxyl-terminal hydrolase 9 (UBP9) of Arabidopsis thaliana (Mouse-ear cress).